Reading from the N-terminus, the 286-residue chain is ATP synthase gamma chain (286 aa).

This sequence belongs to the ATPase gamma chain family. F-type ATPases have 2 components, CF(1) - the catalytic core - and CF(0) - the membrane proton channel. CF(1) has five subunits: alpha(3), beta(3), gamma(1), delta(1), epsilon(1). CF(0) has three main subunits: a, b and c.

It localises to the cell inner membrane. In terms of biological role, produces ATP from ADP in the presence of a proton gradient across the membrane. The gamma chain is believed to be important in regulating ATPase activity and the flow of protons through the CF(0) complex. This chain is ATP synthase gamma chain, found in Alcanivorax borkumensis (strain ATCC 700651 / DSM 11573 / NCIMB 13689 / SK2).